We begin with the raw amino-acid sequence, 93 residues long: Small ribosomal subunit protein uS19 (93 aa).

The protein belongs to the universal ribosomal protein uS19 family.

Protein S19 forms a complex with S13 that binds strongly to the 16S ribosomal RNA. The protein is Small ribosomal subunit protein uS19 of Desulfitobacterium hafniense (strain Y51).